A 100-amino-acid polypeptide reads, in one-letter code: Small ribosomal subunit protein uS14c (100 aa).

Residues 1-10 (MARKGLIERE) are compositionally biased toward basic and acidic residues. The interval 1–29 (MARKGLIEREKKRKKLEQKYHSIRGSSKK) is disordered.

This sequence belongs to the universal ribosomal protein uS14 family. In terms of assembly, part of the 30S ribosomal subunit.

It localises to the plastid. It is found in the chloroplast. Functionally, binds 16S rRNA, required for the assembly of 30S particles. The sequence is that of Small ribosomal subunit protein uS14c from Acorus calamus (Sweet flag).